A 130-amino-acid polypeptide reads, in one-letter code: Small ribosomal subunit protein uS9 (130 aa).

It belongs to the universal ribosomal protein uS9 family.

The sequence is that of Small ribosomal subunit protein uS9 from Paraburkholderia phymatum (strain DSM 17167 / CIP 108236 / LMG 21445 / STM815) (Burkholderia phymatum).